The sequence spans 504 residues: Glucose-6-phosphate isomerase (504 aa).

Glu-333 serves as the catalytic Proton donor. Residues His-364 and Lys-473 contribute to the active site.

Belongs to the GPI family.

It is found in the cytoplasm. The catalysed reaction is alpha-D-glucose 6-phosphate = beta-D-fructose 6-phosphate. It functions in the pathway carbohydrate biosynthesis; gluconeogenesis. The protein operates within carbohydrate degradation; glycolysis; D-glyceraldehyde 3-phosphate and glycerone phosphate from D-glucose: step 2/4. Functionally, catalyzes the reversible isomerization of glucose-6-phosphate to fructose-6-phosphate. The protein is Glucose-6-phosphate isomerase of Xanthomonas oryzae pv. oryzae (strain PXO99A).